A 297-amino-acid polypeptide reads, in one-letter code: Urease accessory protein UreD (297 aa).

Positions 1-41 (MPQAADIATAPQRPSAPGDVVAAGQPPRARGRAHVSSKRRD) are disordered.

The protein belongs to the UreD family. UreD, UreF and UreG form a complex that acts as a GTP-hydrolysis-dependent molecular chaperone, activating the urease apoprotein by helping to assemble the nickel containing metallocenter of UreC. The UreE protein probably delivers the nickel.

The protein resides in the cytoplasm. Its function is as follows. Required for maturation of urease via the functional incorporation of the urease nickel metallocenter. This Ruegeria sp. (strain TM1040) (Silicibacter sp.) protein is Urease accessory protein UreD.